A 199-amino-acid polypeptide reads, in one-letter code: Probable chemoreceptor glutamine deamidase CheD (199 aa).

Belongs to the CheD family.

It carries out the reaction L-glutaminyl-[protein] + H2O = L-glutamyl-[protein] + NH4(+). Probably deamidates glutamine residues to glutamate on methyl-accepting chemotaxis receptors (MCPs), playing an important role in chemotaxis. This is Probable chemoreceptor glutamine deamidase CheD from Nitratidesulfovibrio vulgaris (strain ATCC 29579 / DSM 644 / CCUG 34227 / NCIMB 8303 / VKM B-1760 / Hildenborough) (Desulfovibrio vulgaris).